The following is a 222-amino-acid chain: Large ribosomal subunit protein mL64 (222 aa).

Disordered stretches follow at residues A19–L46 and K188–S222. Positions Y25–G36 are enriched in basic residues. Residues M99–Q212 are a coiled coil. The Nuclear localization signal signature appears at K184–E200. Residues A203–Q212 are compositionally biased toward low complexity.

Belongs to the mitochondrion-specific ribosomal protein mL64 family. As to quaternary structure, component of the mitochondrial large ribosomal subunit (mt-LSU). Mature mammalian 55S mitochondrial ribosomes consist of a small (28S) and a large (39S) subunit. The 28S small subunit contains a 12S ribosomal RNA (12S mt-rRNA) and 30 different proteins. The 39S large subunit contains a 16S rRNA (16S mt-rRNA), a copy of mitochondrial valine transfer RNA (mt-tRNA(Val)), which plays an integral structural role, and 52 different proteins. Interacts with GADD45A, GADD45B and GADD45G. Interacts with NR4A1 via the NR4A1 AB domain. Interacts with ATAD3A and ATAD3B. In terms of assembly, (Microbial infection) Interacts with the human papilloma virus type 16 (HPV 16) minor capsid protein L2. As to expression, widely expressed. Highly expressed in the thyroid gland, heart, lymph nodes, trachea and adrenal tissues. Expressed at lower level in liver skeletal muscle, kidney, pancreas, testis, ovary and stomach. Barely detectable in adrenal adenoma and papillary thyroid cancer.

Its subcellular location is the mitochondrion. The protein resides in the nucleus. In terms of biological role, acts as a negative regulator of G1 to S cell cycle phase progression by inhibiting cyclin-dependent kinases. Inhibitory effects are additive with GADD45 proteins but also occur in the absence of GADD45 proteins. Acts as a repressor of the orphan nuclear receptor NR4A1 by inhibiting AB domain-mediated transcriptional activity. May be involved in the hormone-mediated regulation of NR4A1 transcriptional activity. May play a role in mitochondrial protein synthesis. The chain is Large ribosomal subunit protein mL64 (GADD45GIP1) from Homo sapiens (Human).